Here is a 79-residue protein sequence, read N- to C-terminus: U16-theraphotoxin-Cg1a (79 aa).

The signal sequence occupies residues M1–A19. Positions S20 to R44 are excised as a propeptide. 3 cysteine pairs are disulfide-bonded: C47-C62, C54-C67, and C61-C74.

The protein belongs to the neurotoxin 10 (Hwtx-1) family. 34 (Jztx-26) subfamily. In terms of tissue distribution, expressed by the venom gland.

Its subcellular location is the secreted. Functionally, probable ion channel inhibitor. The protein is U16-theraphotoxin-Cg1a of Chilobrachys guangxiensis (Chinese earth tiger tarantula).